The primary structure comprises 213 residues: Orotate phosphoribosyltransferase (213 aa).

Residue Lys26 participates in 5-phospho-alpha-D-ribose 1-diphosphate binding. 34–35 contributes to the orotate binding site; it reads FF. 5-phospho-alpha-D-ribose 1-diphosphate is bound by residues 72–73, Arg99, Lys100, Lys103, His105, and 124–132; these read YK and DDVITAGTA. The orotate site is built by Thr128 and Arg156.

The protein belongs to the purine/pyrimidine phosphoribosyltransferase family. PyrE subfamily. In terms of assembly, homodimer. Mg(2+) serves as cofactor.

The catalysed reaction is orotidine 5'-phosphate + diphosphate = orotate + 5-phospho-alpha-D-ribose 1-diphosphate. It participates in pyrimidine metabolism; UMP biosynthesis via de novo pathway; UMP from orotate: step 1/2. Catalyzes the transfer of a ribosyl phosphate group from 5-phosphoribose 1-diphosphate to orotate, leading to the formation of orotidine monophosphate (OMP). This Pseudomonas aeruginosa (strain UCBPP-PA14) protein is Orotate phosphoribosyltransferase.